Here is a 203-residue protein sequence, read N- to C-terminus: Endo-type membrane-bound lytic murein transglycosylase A (203 aa).

Residues 1–15 (MKLRWFAFLIVLLAG) form the signal peptide. A lipid anchor (N-palmitoyl cysteine) is attached at Cys16. A lipid anchor (S-diacylglycerol cysteine) is attached at Cys16.

The protein belongs to the transglycosylase Slt family.

It is found in the cell outer membrane. It catalyses the reaction Endolytic cleavage of the (1-&gt;4)-beta-glycosidic linkage between N-acetylmuramic acid (MurNAc) and N-acetylglucosamine (GlcNAc) residues in peptidoglycan with concomitant formation of a 1,6-anhydrobond in the MurNAc residue.. Murein-degrading enzyme. May play a role in recycling of muropeptides during cell elongation and/or cell division. Preferentially cleaves at a distance of more than two disaccharide units from the ends of the glycan chain. The chain is Endo-type membrane-bound lytic murein transglycosylase A from Shigella boydii serotype 4 (strain Sb227).